The sequence spans 475 residues: AP-1 complex subunit mu-1-I (475 aa).

The MHD domain maps to 175–473; the sequence is KNEAFLDIVE…TQSGDDYTIR (299 aa). The interval 240 to 262 is disordered; sequence ASATTSDNNTETDKKPSITSSSA.

Belongs to the adaptor complexes medium subunit family. In terms of assembly, adaptor protein complex 1 (AP-1) is a heterotetramer composed of two large adaptins (gamma-type subunit APL4 and beta-type subunit APL2), a medium adaptin (mu-type subunit APM1) and a small adaptin (sigma-type subunit APS1). AP-1 interacts with clathrin.

Its subcellular location is the cytoplasmic vesicle. It is found in the clathrin-coated vesicle membrane. The protein localises to the membrane. It localises to the clathrin-coated pit. Functionally, component of the adaptor complexes which link clathrin to receptors in coated vesicles. Clathrin-associated protein complexes are believed to interact with the cytoplasmic tails of membrane proteins, leading to their selection and concentration. The AP-1 complex interacts directly with clathrin. AP57 is probably a subunit of the Golgi membrane adaptor. This Saccharomyces cerevisiae (strain ATCC 204508 / S288c) (Baker's yeast) protein is AP-1 complex subunit mu-1-I (APM1).